The following is a 232-amino-acid chain: Ribonuclease P protein component 3 (232 aa).

It belongs to the eukaryotic/archaeal RNase P protein component 3 family. Consists of a catalytic RNA component and at least 4-5 protein subunits.

It is found in the cytoplasm. It catalyses the reaction Endonucleolytic cleavage of RNA, removing 5'-extranucleotides from tRNA precursor.. In terms of biological role, part of ribonuclease P, a protein complex that generates mature tRNA molecules by cleaving their 5'-ends. In Halobacterium salinarum (strain ATCC 29341 / DSM 671 / R1), this protein is Ribonuclease P protein component 3.